The chain runs to 106 residues: Probable insulin-like peptide beta-type 2 (106 aa).

The signal sequence occupies residues 1–15; the sequence is MNAIIFCLLFTTVTA. Residues 16–56 constitute a propeptide that is removed on maturation; that stretch reads TYEVFGKGIEHRNEHLIINQLDIIPVESTPTPNRASRVQKR. Intrachain disulfides connect C58/C86, C70/C99, C73/C100, and C85/C90.

Belongs to the insulin family.

Its subcellular location is the secreted. This is Probable insulin-like peptide beta-type 2 (ins-2) from Caenorhabditis elegans.